We begin with the raw amino-acid sequence, 517 residues long: ATP synthase subunit alpha 1 (517 aa).

176–183 lines the ATP pocket; it reads GDRQTGKT.

Belongs to the ATPase alpha/beta chains family. F-type ATPases have 2 components, CF(1) - the catalytic core - and CF(0) - the membrane proton channel. CF(1) has five subunits: alpha(3), beta(3), gamma(1), delta(1), epsilon(1). CF(0) has three main subunits: a(1), b(2) and c(9-12). The alpha and beta chains form an alternating ring which encloses part of the gamma chain. CF(1) is attached to CF(0) by a central stalk formed by the gamma and epsilon chains, while a peripheral stalk is formed by the delta and b chains.

Its subcellular location is the cell inner membrane. The enzyme catalyses ATP + H2O + 4 H(+)(in) = ADP + phosphate + 5 H(+)(out). Its function is as follows. Produces ATP from ADP in the presence of a proton gradient across the membrane. The alpha chain is a regulatory subunit. In Shewanella frigidimarina (strain NCIMB 400), this protein is ATP synthase subunit alpha 1.